Consider the following 671-residue polypeptide: Anaphase-promoting complex subunit cut9 (671 aa).

A disordered region spans residues 1-24 (MVVKRTQTDSRMQSTPGNHNHPDA). TPR repeat units follow at residues 83 to 114 (REDYLRLWRHDALMQQQYKCAAFVGEKVLDIT), 117 to 142 (PNDAFWLAQVYCCTGDYARAKCLLTK), 150 to 173 (SACRYLAAFCLVKLYDWQGALNLL), 198 to 229 (LEASMCYLRGQVYTNLSNFDRAKECYKEALMV), 234 to 257 (YEAFDQLVSNHLLTADEEWDLVLK), 268 to 296 (AAFLRSLYMLKLNKTSHEDELRRAEDYLS), 306 to 334 (DLLLCKADTLFVRSRFIDVLAITTKILEI), 341 to 368 (VYPLHLASLHESGEKNKLYLISNDLVDR), 373 to 402 (AVTWLAVGIYYLCVNKISEARRYFSKSSTM), 407 to 435 (GPAWIGFAHSFAIEGEHDQAISAYTTAAR), 442 to 470 (LPYLFLGMQHMQLGNILLANEYLQSSYAL), 475 to 507 (PLLLNELGVVAFNKSDMQTAINHFQNALLLVKK), 513 to 545 (KPWAATWANLGHAYRKLKMYDAAIDALNQGLLL), and 550 to 579 (ANVHTAIALVYLHKKIPGLAITHLHESLAI). The interval 622–643 (NLNTSDKSMSMEDQSGKVTESV) is disordered.

In terms of assembly, the APC/C is composed of at least 13 subunits: apc1, apc2, nuc2, apc4, apc5, cut9, apc8, apc10, apc11, hcn1, apc13, apc14 and apc15. Homodimer. Interacts directly with nuc2 and hcn1. Phosphorylated.

It is found in the nucleus. Component of the anaphase-promoting complex/cyclosome (APC/C), a cell cycle-regulated E3 ubiquitin-protein ligase complex that controls progression through mitosis and the G1 phase of the cell cycle. The APC/C is thought to confer substrate specificity and, in the presence of ubiquitin-conjugating E2 enzymes, it catalyzes the formation of protein-ubiquitin conjugates that are subsequently degraded by the 26S proteasome. May play a pivotal role in the control of anaphase. The chain is Anaphase-promoting complex subunit cut9 (cut9) from Schizosaccharomyces pombe (strain 972 / ATCC 24843) (Fission yeast).